Here is a 209-residue protein sequence, read N- to C-terminus: Large ribosomal subunit protein uL3 (209 aa).

Belongs to the universal ribosomal protein uL3 family. In terms of assembly, part of the 50S ribosomal subunit. Forms a cluster with proteins L14 and L19.

Functionally, one of the primary rRNA binding proteins, it binds directly near the 3'-end of the 23S rRNA, where it nucleates assembly of the 50S subunit. The protein is Large ribosomal subunit protein uL3 of Pelobacter propionicus (strain DSM 2379 / NBRC 103807 / OttBd1).